A 193-amino-acid polypeptide reads, in one-letter code: GTP cyclohydrolase-2 (193 aa).

45 to 49 serves as a coordination point for GTP; the sequence is RIHSE. Residues Cys-50, Cys-61, and Cys-63 each contribute to the Zn(2+) site. GTP contacts are provided by residues Gln-66, 87-89, and Thr-109; that span reads EGR. The active-site Proton acceptor is Asp-121. Arg-123 functions as the Nucleophile in the catalytic mechanism. GTP-binding residues include Thr-144 and Lys-149.

Belongs to the GTP cyclohydrolase II family. Requires Zn(2+) as cofactor.

It carries out the reaction GTP + 4 H2O = 2,5-diamino-6-hydroxy-4-(5-phosphoribosylamino)-pyrimidine + formate + 2 phosphate + 3 H(+). It functions in the pathway cofactor biosynthesis; riboflavin biosynthesis; 5-amino-6-(D-ribitylamino)uracil from GTP: step 1/4. Catalyzes the conversion of GTP to 2,5-diamino-6-ribosylamino-4(3H)-pyrimidinone 5'-phosphate (DARP), formate and pyrophosphate. The polypeptide is GTP cyclohydrolase-2 (Campylobacter hominis (strain ATCC BAA-381 / DSM 21671 / CCUG 45161 / LMG 19568 / NCTC 13146 / CH001A)).